The following is a 241-amino-acid chain: ATP synthase subunit a (241 aa).

A run of 5 helical transmembrane segments spans residues 30–50, 91–111, 128–148, 193–213, and 214–234; these read GQVFMTSWILIGALLTLVVVG, FIGTLFLFIFVSNWGGALIPW, INTTVALALLVSLSYFYAGLS, LVVAVLVFLVPLVLPVPVMFL, and GLFTSAIQALIFATLAAYYIG.

It belongs to the ATPase A chain family. As to quaternary structure, F-type ATPases have 2 components, CF(1) - the catalytic core - and CF(0) - the membrane proton channel. CF(1) has five subunits: alpha(3), beta(3), gamma(1), delta(1), epsilon(1). CF(0) has four main subunits: a, b, b' and c.

It is found in the cellular thylakoid membrane. Key component of the proton channel; it plays a direct role in the translocation of protons across the membrane. The sequence is that of ATP synthase subunit a from Prochlorococcus marinus (strain SARG / CCMP1375 / SS120).